Consider the following 182-residue polypeptide: uncharacterized protein (182 aa).

2 disordered regions span residues 17–53 (AVSQ…QGSK) and 128–159 (DSLG…PKRS). Over residues 42-53 (PQPQCPSAQGSK) the composition is skewed to polar residues. Positions 129–138 (SLGSSASSSS) are enriched in low complexity.

This is an uncharacterized protein from Homo sapiens (Human).